The primary structure comprises 140 residues: Calcium-binding protein B (140 aa).

2 EF-hand domains span residues 38-73 (ATLS…INQP) and 74-109 (KTYL…KTSS). Residues aspartate 51, asparagine 53, serine 55, aspartate 57, and glutamate 62 each contribute to the Ca(2+) site.

This is Calcium-binding protein B (cbpB) from Dictyostelium discoideum (Social amoeba).